Consider the following 2784-residue polypeptide: Cilia- and flagella-associated protein 46 (2784 aa).

The stretch at 129-162 is one TPR 1 repeat; the sequence is GLEVAAANQPRYQFLVYNASVHHWRVVAPLHRDG. Positions 242-268 form a coiled coil; the sequence is TAAAAKLTELQKDVARLQVHLATLAAA. One copy of the TPR 2 repeat lies at 401-434; that stretch reads SLAPVVVAAHVKALEQLEDVLTTFTKLADVEGIH. 2 disordered regions span residues 543–562 and 581–607; these read SAEP…RSKE and RDLP…AAAR. Residues 585 to 595 are compositionally biased toward pro residues; sequence HPPPPAPTDPP. Residues 644-665 adopt a coiled-coil conformation; that stretch reads AVDREMVLLQAQLAHYEAEAAI. The tract at residues 670 to 697 is disordered; the sequence is RRRADISPPTRPSPPEVDGEGVRQPPAT. The stretch at 708–743 is one TPR 3 repeat; the sequence is ASVRSMRGAMSVNEPWLTLNNAVQLYNAALPLMQQH. Disordered regions lie at residues 799–837 and 929–954; these read DAGQ…PAYK and RVNE…KPHG. Residues 802 to 817 show a composition bias toward acidic residues; it reads QELEDDDDEDSLDEDG. The stretch at 976–1009 is one TPR 4 repeat; that stretch reads LELWAKMARAVADAGVWPAALECSAAALAALPGA. The span at 1275 to 1288 shows a compositional bias: acidic residues; sequence TGDLDGDGTDDEDD. 2 disordered regions span residues 1275–1351 and 1640–1673; these read TGDL…RVPE and AAGG…HGQL. Over residues 1298–1311 the composition is skewed to gly residues; the sequence is SGGGSSSGRAGGGF. Positions 1646 to 1658 are enriched in basic and acidic residues; it reads GGRESPSPHDDGI. TPR repeat units follow at residues 1712 to 1745 and 1854 to 1886; these read HDVW…AADC and MEML…LAAR. A coiled-coil region spans residues 1961-1984; sequence RLAEVQLAAAEERERLAGADREKA. 4 disordered regions span residues 2068 to 2112, 2278 to 2303, 2346 to 2389, and 2441 to 2465; these read RPFV…EAAA, ATAE…PAAA, AAKG…PGAA, and LPLP…AGPT. A compositionally biased stretch (pro residues) spans 2069 to 2083; it reads PFVPPPKPPGAPKRP. Positions 2087–2096 are enriched in acidic residues; that stretch reads AEEEEDEEGP. Over residues 2097–2112 the composition is skewed to low complexity; sequence DTAAADAAAEAAEAAA. Residues 2378-2389 are compositionally biased toward low complexity; sequence SKQGPKSGPGAA. Positions 2450-2461 are enriched in basic and acidic residues; it reads DGKKEKKDKKEA. One copy of the TPR 7 repeat lies at 2613-2646; it reads ATGGPCTGLLFLGVGRFAAHVPPAVLASAPLGGC.

The protein belongs to the CFAP46 family. As to quaternary structure, part of the PDCP1 complex composed of CFAP46, CFAP54, CFAP74 and CFAP221; the PDCP1 complex binds calmodulin.

It is found in the cytoplasm. The protein localises to the cytoskeleton. It localises to the cilium axoneme. Its function is as follows. As part of the central apparatus of the cilium axoneme plays a role in cilium movement and thereby cell motility. This is Cilia- and flagella-associated protein 46 from Chlamydomonas reinhardtii (Chlamydomonas smithii).